The primary structure comprises 256 residues: MVATGGQAQDQSHNQEPGVLCPTSAVTGLPQKRYYRQRAHSNPIADHSFDYPARPEDVDWRSMYPSIQQGQQVSFADIGCGYGGFLITLGEMFPEKLSIGMEIRVKVSDYVVDRIAALRRKGADTGAYQNVACLRTNAMKYLPNYFAKGQLEKMFFLYPDPHFKRAKHKWRIINQALLSEYAYVLRKGGLVYTMTDVEDLHKWIVAHMEEHPLYERLTEEEANADPITPKLYQSSEEGAKVVRNKGDHFLAIFRRL.

Residues M1–Q15 show a composition bias toward polar residues. The disordered stretch occupies residues M1–P22. Residues G79, E102–I103, N137–A138, and L157 each bind S-adenosyl-L-methionine. D160 is an active-site residue. S235 to E237 contacts S-adenosyl-L-methionine.

This sequence belongs to the class I-like SAM-binding methyltransferase superfamily. TrmB family.

The protein resides in the nucleus. The catalysed reaction is guanosine(46) in tRNA + S-adenosyl-L-methionine = N(7)-methylguanosine(46) in tRNA + S-adenosyl-L-homocysteine. Its pathway is tRNA modification; N(7)-methylguanine-tRNA biosynthesis. Catalyzes the formation of N(7)-methylguanine at position 46 (m7G46) in tRNA. The polypeptide is tRNA (guanine-N(7)-)-methyltransferase (Drosophila yakuba (Fruit fly)).